The primary structure comprises 270 residues: Glucosamine-6-phosphate deaminase (270 aa).

The active-site Proton acceptor; for enolization step is the Asp72. Catalysis depends on Asp141, which acts as the For ring-opening step. The active-site Proton acceptor; for ring-opening step is the His143. Residue Glu148 is the For ring-opening step of the active site.

Belongs to the glucosamine/galactosamine-6-phosphate isomerase family. NagB subfamily. Homohexamer.

It catalyses the reaction alpha-D-glucosamine 6-phosphate + H2O = beta-D-fructose 6-phosphate + NH4(+). It participates in amino-sugar metabolism; N-acetylneuraminate degradation; D-fructose 6-phosphate from N-acetylneuraminate: step 5/5. Its activity is regulated as follows. Allosterically activated by N-acetylglucosamine 6-phosphate (GlcNAc6P). Functionally, catalyzes the reversible isomerization-deamination of glucosamine 6-phosphate (GlcN6P) to form fructose 6-phosphate (Fru6P) and ammonium ion. In Haemophilus influenzae (strain PittEE), this protein is Glucosamine-6-phosphate deaminase.